A 514-amino-acid chain; its full sequence is Maturase K (514 aa).

It belongs to the intron maturase 2 family. MatK subfamily.

The protein resides in the plastid. Its subcellular location is the chloroplast. Usually encoded in the trnK tRNA gene intron. Probably assists in splicing its own and other chloroplast group II introns. The chain is Maturase K from Drosophyllum lusitanicum (Portuguese sundew).